The primary structure comprises 570 residues: Multidrug and toxin extrusion protein 1 (570 aa).

The residue at position 1 (Met1) is an N-acetylmethionine. Residues 1–37 (MEAPEEPAPVRGGPEATLEIHGSRFLRLSAFREELRA) lie on the Cytoplasmic side of the membrane. The helical transmembrane segment at 38–58 (LLVLAGPAFLVQLMVFLISFI) threads the bilayer. The Extracellular portion of the chain corresponds to 59–72 (SSVFCGHLGKLELD). A helical transmembrane segment spans residues 73-93 (AVTLAIAVINVTGVSVGFGLS). The Cytoplasmic portion of the chain corresponds to 94–120 (SACDTLISQTYGSQNLKHVGVILQRSA). The helical transmembrane segment at 121–141 (LILLLCCFPCWALFLNTQHIL) threads the bilayer. At 142–152 (LLFRQDPDVSR) the chain is on the extracellular side. A helical transmembrane segment spans residues 153–173 (LTQTYVTIFIPALPATFLYML). The Cytoplasmic portion of the chain corresponds to 174-176 (QVK). A helical membrane pass occupies residues 177–197 (YLLNQGIVLPQIVTGVAANLV). Topologically, residues 198–216 (NALANYLFLHQLHLGAIGS) are extracellular. A helical membrane pass occupies residues 217–237 (ALANLISQYTLALLLFFYILG). Residues 238-251 (KKLHQATWGGWSLE) lie on the Cytoplasmic side of the membrane. The helical transmembrane segment at 252–272 (CLQDWASFLHLAVPSMLMLCM) threads the bilayer. The Extracellular portion of the chain corresponds to 273 to 295 (EWWAYEVGSFLSGILGMVELGAQ). The helical transmembrane segment at 296–316 (SIVYELAIIVYMVPAGFSVAA) threads the bilayer. Residues 317 to 336 (SVRVGNALGAGDMEQARKSS) are Cytoplasmic-facing. The helical transmembrane segment at 337-357 (TVSLLITVLFAVAFSVLLLSC) threads the bilayer. Residues 358–370 (KDHVGYIFTTDRD) are Extracellular-facing. Residues 371–391 (IINLVAQVVPIYAVSHLFEAL) traverse the membrane as a helical segment. Topologically, residues 392–408 (ACTSGGVLRGSGNQKVG) are cytoplasmic. A helical transmembrane segment spans residues 409 to 429 (AIVNTIGYYVVGLPIGIALMF). Topologically, residues 430-437 (ATKLGVMG) are extracellular. A helical membrane pass occupies residues 438–458 (LWSGIIICTVFQAVCFLGFII). At 459–546 (QLNWKKACQQ…LSRKQLVLRR (88 aa)) the chain is on the cytoplasmic side. Residues 508–534 (DVGKTGETQSDQQMRQEEPLPEHPQDS) form a disordered region. Residues 521 to 533 (MRQEEPLPEHPQD) are compositionally biased toward basic and acidic residues. Residues 547–567 (GLLLLGVFLILLVGILVRFYV) form a helical membrane-spanning segment. Topologically, residues 568 to 570 (RIQ) are extracellular.

The protein belongs to the multi antimicrobial extrusion (MATE) (TC 2.A.66.1) family.

The protein localises to the cell membrane. It is found in the apical cell membrane. The enzyme catalyses thiamine(out) + H(+)(in) = thiamine(in) + H(+)(out). It carries out the reaction estrone 3-sulfate(in) + H(+)(out) = estrone 3-sulfate(out) + H(+)(in). The catalysed reaction is creatinine(in) + H(+)(out) = creatinine(out) + H(+)(in). It catalyses the reaction agmatine(in) + H(+)(out) = agmatine(out) + H(+)(in). Multidrug efflux pump that functions as a H(+)/organic cation antiporter. Plays a physiological role in the excretion of cationic compounds including endogenous metabolites, drugs, toxins through the kidney and liver, into urine and bile respectively. Mediates the efflux of endogenous compounds such as creatinine, vitamin B1/thiamine, agmatine and estrone-3-sulfate. May also contribute to regulate the transport of cationic compounds in testis across the blood-testis-barrier. The sequence is that of Multidrug and toxin extrusion protein 1 (SLC47A1) from Pongo abelii (Sumatran orangutan).